A 120-amino-acid polypeptide reads, in one-letter code: UPF0344 protein BCAH187_A1308 (120 aa).

4 helical membrane-spanning segments follow: residues 6–26 (ITAW…YSAG), 32–52 (VHMG…WLYL), 64–84 (WYGL…MVLV), and 91–111 (ATGA…YLGL).

This sequence belongs to the UPF0344 family.

Its subcellular location is the cell membrane. The protein is UPF0344 protein BCAH187_A1308 of Bacillus cereus (strain AH187).